The following is a 614-amino-acid chain: Bifunctional 3'-phosphoadenosine 5'-phosphosulfate synthase 2 (614 aa).

The adenylyl-sulfate kinase stretch occupies residues 1 to 215; that stretch reads MSGIKKQKTE…VVELLQEQNI (215 aa). 52–57 contacts ATP; the sequence is GAGKTT. Adenosine 5'-phosphosulfate is bound by residues 79–82, F91, 96–99, 122–123, K161, and 174–175; these read DNVR, REEN, IS, and GF. ATP contacts are provided by residues S197, 409-412, 511-515, and A553; these read QLRN and GRDPA. The segment at 224–614 is sulfate adenylyltransferase; it reads IHELFVPENK…TDYYRSLEKN (391 aa).

It in the N-terminal section; belongs to the APS kinase family. This sequence in the C-terminal section; belongs to the sulfate adenylyltransferase family. In terms of tissue distribution, expressed in cartilage and adrenal gland.

The enzyme catalyses sulfate + ATP + H(+) = adenosine 5'-phosphosulfate + diphosphate. It catalyses the reaction adenosine 5'-phosphosulfate + ATP = 3'-phosphoadenylyl sulfate + ADP + H(+). The protein operates within sulfur metabolism; sulfate assimilation. Functionally, bifunctional enzyme with both ATP sulfurylase and APS kinase activity, which mediates two steps in the sulfate activation pathway. The first step is the transfer of a sulfate group to ATP to yield adenosine 5'-phosphosulfate (APS), and the second step is the transfer of a phosphate group from ATP to APS yielding 3'-phosphoadenylylsulfate/PAPS, the activated sulfate donor used by sulfotransferases. In mammals, PAPS is the sole source of sulfate while APS appears to only be an intermediate in the sulfate-activation pathway. Plays indirectly an important role in skeletogenesis during postnatal growth. This Homo sapiens (Human) protein is Bifunctional 3'-phosphoadenosine 5'-phosphosulfate synthase 2 (PAPSS2).